The sequence spans 340 residues: Ribosomal RNA large subunit methyltransferase F (340 aa).

Residues 1–36 (MNAPRTPKPARKKPDSATPAKPVEPRKEASLHPRNR) are disordered.

Belongs to the methyltransferase superfamily. METTL16/RlmF family.

Its subcellular location is the cytoplasm. The enzyme catalyses adenosine(1618) in 23S rRNA + S-adenosyl-L-methionine = N(6)-methyladenosine(1618) in 23S rRNA + S-adenosyl-L-homocysteine + H(+). In terms of biological role, specifically methylates the adenine in position 1618 of 23S rRNA. The chain is Ribosomal RNA large subunit methyltransferase F from Pseudomonas fluorescens (strain Pf0-1).